Reading from the N-terminus, the 214-residue chain is Adenylate kinase (214 aa).

Position 10–15 (10–15) interacts with ATP; that stretch reads GAGKGT. Residues 30 to 59 are NMP; that stretch reads STGDMFRAALKNQTPLGLKAKEYMDKGELV. AMP contacts are provided by residues Thr-31, Arg-36, 57–59, 85–88, and Gln-92; these read ELV and GFPR. Residues 126 to 163 are LID; the sequence is GRRVCRQCGATYHVKFNPPKVEGVCDACGGELYQRSDD. Residue Arg-127 participates in ATP binding. Cys-130 and Cys-133 together coordinate Zn(2+). 136–137 is a binding site for ATP; it reads TY. Zn(2+) is bound by residues Cys-150 and Cys-153. Positions 160 and 171 each coordinate AMP. Position 199 (Lys-199) interacts with ATP.

Belongs to the adenylate kinase family. Monomer.

The protein localises to the cytoplasm. The catalysed reaction is AMP + ATP = 2 ADP. It participates in purine metabolism; AMP biosynthesis via salvage pathway; AMP from ADP: step 1/1. Catalyzes the reversible transfer of the terminal phosphate group between ATP and AMP. Plays an important role in cellular energy homeostasis and in adenine nucleotide metabolism. This chain is Adenylate kinase, found in Carboxydothermus hydrogenoformans (strain ATCC BAA-161 / DSM 6008 / Z-2901).